Here is a 313-residue protein sequence, read N- to C-terminus: Ribosomal protein L11 methyltransferase (313 aa).

S-adenosyl-L-methionine contacts are provided by Thr161, Gly182, Asp204, and Asn247.

It belongs to the methyltransferase superfamily. PrmA family.

Its subcellular location is the cytoplasm. It carries out the reaction L-lysyl-[protein] + 3 S-adenosyl-L-methionine = N(6),N(6),N(6)-trimethyl-L-lysyl-[protein] + 3 S-adenosyl-L-homocysteine + 3 H(+). Functionally, methylates ribosomal protein L11. This Alkaliphilus oremlandii (strain OhILAs) (Clostridium oremlandii (strain OhILAs)) protein is Ribosomal protein L11 methyltransferase.